The sequence spans 306 residues: Porphobilinogen deaminase (306 aa).

Cys239 is subject to S-(dipyrrolylmethanemethyl)cysteine.

Belongs to the HMBS family. In terms of assembly, monomer. Dipyrromethane is required as a cofactor.

It carries out the reaction 4 porphobilinogen + H2O = hydroxymethylbilane + 4 NH4(+). Its pathway is porphyrin-containing compound metabolism; protoporphyrin-IX biosynthesis; coproporphyrinogen-III from 5-aminolevulinate: step 2/4. In terms of biological role, tetrapolymerization of the monopyrrole PBG into the hydroxymethylbilane pre-uroporphyrinogen in several discrete steps. This is Porphobilinogen deaminase from Helicobacter pylori (strain Shi470).